We begin with the raw amino-acid sequence, 741 residues long: Cysteine--tRNA ligase, cytoplasmic (741 aa).

Residue cysteine 46 coordinates Zn(2+). A 'HIGH' region motif is present at residues 48 to 58 (PTVYDASHMGH). Serine 297 is subject to Phosphoserine. The Zn(2+) site is built by cysteine 340, histidine 365, and glutamate 369. The short motif at 398–402 (KMSKS) is the 'KMSKS' region element. Position 401 (lysine 401) interacts with ATP.

This sequence belongs to the class-I aminoacyl-tRNA synthetase family. Requires Zn(2+) as cofactor.

The protein localises to the cytoplasm. The enzyme catalyses tRNA(Cys) + L-cysteine + ATP = L-cysteinyl-tRNA(Cys) + AMP + diphosphate. This is Cysteine--tRNA ligase, cytoplasmic (Aats-cys) from Drosophila pseudoobscura pseudoobscura (Fruit fly).